The sequence spans 498 residues: Protein flp (498 aa).

Transmembrane regions (helical) follow at residues 6-26 (LYFL…IYIT), 389-409 (FNIV…FSAY), 433-453 (LSLC…YLIL), and 471-491 (LALI…LLFL).

It localises to the cell membrane. Functionally, its precise function is unknown. Has no penicillin-binding activity and is not involved in methicillin resistance. This Staphylococcus aureus (strain COL) protein is Protein flp (flp).